Consider the following 1224-residue polypeptide: DNA-directed RNA polymerase subunit beta'' (1224 aa).

Zn(2+) contacts are provided by Cys233, Cys308, Cys315, and Cys318.

Belongs to the RNA polymerase beta' chain family. RpoC2 subfamily. In terms of assembly, in plastids the minimal PEP RNA polymerase catalytic core is composed of four subunits: alpha, beta, beta', and beta''. When a (nuclear-encoded) sigma factor is associated with the core the holoenzyme is formed, which can initiate transcription. Requires Zn(2+) as cofactor.

It localises to the plastid. The protein localises to the chloroplast. The enzyme catalyses RNA(n) + a ribonucleoside 5'-triphosphate = RNA(n+1) + diphosphate. Its function is as follows. DNA-dependent RNA polymerase catalyzes the transcription of DNA into RNA using the four ribonucleoside triphosphates as substrates. The chain is DNA-directed RNA polymerase subunit beta'' from Pinus thunbergii (Japanese black pine).